Consider the following 804-residue polypeptide: Leucine--tRNA ligase (804 aa).

Residues 40–51 (PYPSGAGLHVGH) carry the 'HIGH' region motif. Residues 576–580 (KMSKS) carry the 'KMSKS' region motif. An ATP-binding site is contributed by lysine 579.

The protein belongs to the class-I aminoacyl-tRNA synthetase family.

It is found in the cytoplasm. The catalysed reaction is tRNA(Leu) + L-leucine + ATP = L-leucyl-tRNA(Leu) + AMP + diphosphate. The chain is Leucine--tRNA ligase from Staphylococcus haemolyticus (strain JCSC1435).